Here is a 1252-residue protein sequence, read N- to C-terminus: Fanconi anemia group J protein homolog (1252 aa).

Residues 11–452 form the Helicase ATP-binding domain; the sequence is GGVKIMFPCK…KDHEQLRAMC (442 aa). A Nuclear localization signal motif is present at residues 164-181; sequence RKRIRPLETEQQVRKRHC. 191–198 serves as a coordination point for ATP; it reads ALEVYNQR. Residues Cys292, Cys308, Cys320, and Cys360 each coordinate [4Fe-4S] cluster. Residues 403–406 carry the DEAH box motif; that stretch reads DEAH. Disordered stretches follow at residues 919–1008 and 1212–1252; these read SKEP…DRTN and TNGE…STST. Polar residues-rich tracts occupy residues 920–930 and 952–969; these read KEPSSASQQEA and HLTT…NQPG. Basic and acidic residues predominate over residues 989-1008; the sequence is MDSTPRRPANKTEKKSDRTN. The segment covering 1215–1224 has biased composition (acidic residues); that stretch reads EEAEQVESQE. The span at 1228–1239 shows a compositional bias: basic residues; that stretch reads KKRKISLSRSRN.

This sequence belongs to the DEAD box helicase family. DEAH subfamily. Requires [4Fe-4S] cluster as cofactor.

The protein resides in the nucleus. It carries out the reaction Couples ATP hydrolysis with the unwinding of duplex DNA at the replication fork by translocating in the 5'-3' direction. This creates two antiparallel DNA single strands (ssDNA). The leading ssDNA polymer is the template for DNA polymerase III holoenzyme which synthesizes a continuous strand.. The enzyme catalyses ATP + H2O = ADP + phosphate + H(+). Its function is as follows. DNA-dependent helicase and 5' to 3' DNA helicase required for the maintenance of chromosomal stability. Involved in the repair of DNA double-strand breaks by homologous recombination. Involved in the repair of abasic sites at replication forks by promoting the degradation of DNA-protein cross-links: acts by catalyzing unfolding of HMCES DNA-protein cross-link via its helicase activity, exposing the underlying DNA and enabling cleavage of the DNA-protein adduct by the SPRTN metalloprotease. This chain is Fanconi anemia group J protein homolog (BRIP1), found in Gallus gallus (Chicken).